Consider the following 319-residue polypeptide: Aspartate carbamoyltransferase catalytic subunit (319 aa).

Residues Arg54 and Thr55 each coordinate carbamoyl phosphate. Residue Lys82 participates in L-aspartate binding. 3 residues coordinate carbamoyl phosphate: Arg104, His134, and Gln137. Positions 171 and 227 each coordinate L-aspartate. Carbamoyl phosphate contacts are provided by Gly271 and Pro272.

The protein belongs to the aspartate/ornithine carbamoyltransferase superfamily. ATCase family. In terms of assembly, heterododecamer (2C3:3R2) of six catalytic PyrB chains organized as two trimers (C3), and six regulatory PyrI chains organized as three dimers (R2).

The catalysed reaction is carbamoyl phosphate + L-aspartate = N-carbamoyl-L-aspartate + phosphate + H(+). It functions in the pathway pyrimidine metabolism; UMP biosynthesis via de novo pathway; (S)-dihydroorotate from bicarbonate: step 2/3. Its function is as follows. Catalyzes the condensation of carbamoyl phosphate and aspartate to form carbamoyl aspartate and inorganic phosphate, the committed step in the de novo pyrimidine nucleotide biosynthesis pathway. The protein is Aspartate carbamoyltransferase catalytic subunit of Kineococcus radiotolerans (strain ATCC BAA-149 / DSM 14245 / SRS30216).